Consider the following 175-residue polypeptide: Large ribosomal subunit protein uL15 (175 aa).

Disordered stretches follow at residues 1–65 and 155–175; these read MSTL…LPKF and PESAAKAHAGKGVKAPRQPKA. Over residues 12-21 the composition is skewed to basic residues; it reads RSWHRKKRVG. Residues 22-38 are compositionally biased toward gly residues; the sequence is RGQGSGLGKTAGRGGKG. Positions 160–169 are enriched in low complexity; that stretch reads KAHAGKGVKA.

It belongs to the universal ribosomal protein uL15 family. In terms of assembly, part of the 50S ribosomal subunit.

Binds to the 23S rRNA. This Myxococcus xanthus (strain DK1622) protein is Large ribosomal subunit protein uL15.